The following is a 622-amino-acid chain: MSLDISQFPVLAQANTPNELRQLPQALLPQVADELREFLLKSVGISSGHFASGLGTVELTVALHYVYNTPFDRLIWDVGHQAYPHKILTGRRDKMHTIRQKDGLHPFPWREESEYDTFSVGHSGTSISAALAMAIAAEKEQAGRKVVAVIGDGAMTGGMVFEAMNHAGDLHNDMLVVLNDNEMSISENVGALNNHLAQLMSGRFYTTLREGGKKVLKGMPVIKEMAKRTEEHLKGMVVPGTLFEELGFNYIGPIDGHDVDALVETMRNMRNLKGPQVLHIMTKKGRGYEPAEKDPIGWHAVPKFDPSLFKKPATKPGLPTFSQVFGKWLCDIAEQDEKVLAITPAMREGSGMVEFSQRFPKQYFDAAIAEQHAVTLAAGFACEGFKPVVAIYSTFLQRAYDQLIHDVALQQLPVLFAIDRGGIVGADGPTHQGAFDLSFMRCIPNMVIMAPSDENECRQMLYTGYCYDAGPSAVRYPRGSATGAMQVEAMTALPIGKGVIKRVGKRIAILNFGTLLASALTAAESLDATVVDMRFVKPLDVDLVKEMAQTHEVLVTVEENAIMGGAGAGVLEQLQKLRMPKAVLQIGLPDEFIKHGSPEEVTHDLQLDAEGILAQINAYLAQ.

Thiamine diphosphate is bound by residues His-80 and 121 to 123 (GHS). Asp-152 lines the Mg(2+) pocket. Thiamine diphosphate contacts are provided by residues 153 to 154 (GA), Asn-181, Tyr-288, and Glu-370. Residue Asn-181 participates in Mg(2+) binding.

The protein belongs to the transketolase family. DXPS subfamily. Homodimer. Mg(2+) serves as cofactor. It depends on thiamine diphosphate as a cofactor.

It catalyses the reaction D-glyceraldehyde 3-phosphate + pyruvate + H(+) = 1-deoxy-D-xylulose 5-phosphate + CO2. It functions in the pathway metabolic intermediate biosynthesis; 1-deoxy-D-xylulose 5-phosphate biosynthesis; 1-deoxy-D-xylulose 5-phosphate from D-glyceraldehyde 3-phosphate and pyruvate: step 1/1. Its function is as follows. Catalyzes the acyloin condensation reaction between C atoms 2 and 3 of pyruvate and glyceraldehyde 3-phosphate to yield 1-deoxy-D-xylulose-5-phosphate (DXP). In Shewanella baltica (strain OS195), this protein is 1-deoxy-D-xylulose-5-phosphate synthase.